The sequence spans 345 residues: UDP-N-acetylenolpyruvoylglucosamine reductase (345 aa).

The FAD-binding PCMH-type domain maps to 16 to 185 (VNAFAKSVVT…VSVGLRLCKK (170 aa)). Residue Arg162 is part of the active site. Catalysis depends on Ser231, which acts as the Proton donor. Glu328 is a catalytic residue.

Belongs to the MurB family. The cofactor is FAD.

The protein localises to the cytoplasm. The enzyme catalyses UDP-N-acetyl-alpha-D-muramate + NADP(+) = UDP-N-acetyl-3-O-(1-carboxyvinyl)-alpha-D-glucosamine + NADPH + H(+). Its pathway is cell wall biogenesis; peptidoglycan biosynthesis. Its function is as follows. Cell wall formation. This is UDP-N-acetylenolpyruvoylglucosamine reductase from Blochmanniella pennsylvanica (strain BPEN).